Reading from the N-terminus, the 248-residue chain is uncharacterized protein (248 aa).

A helical transmembrane segment spans residues 30-50 (LIALAIFIGLIAIFMFGCKAA). Disordered stretches follow at residues 59-91 (NRDT…MDPP) and 208-248 (TTES…VSTR). 2 stretches are compositionally biased toward polar residues: residues 210–220 (ESPAPAQSTSN) and 239–248 (SLHNETVSTR).

It is found in the membrane. This is an uncharacterized protein from Caenorhabditis elegans.